The following is a 122-amino-acid chain: Large ribosomal subunit protein uL14 (122 aa).

It belongs to the universal ribosomal protein uL14 family. As to quaternary structure, part of the 50S ribosomal subunit. Forms a cluster with proteins L3 and L19. In the 70S ribosome, L14 and L19 interact and together make contacts with the 16S rRNA in bridges B5 and B8.

Its function is as follows. Binds to 23S rRNA. Forms part of two intersubunit bridges in the 70S ribosome. This chain is Large ribosomal subunit protein uL14, found in Dechloromonas aromatica (strain RCB).